We begin with the raw amino-acid sequence, 218 residues long: Translation initiation factor 6 (218 aa).

It belongs to the eIF-6 family.

Its function is as follows. Binds to the 50S ribosomal subunit and prevents its association with the 30S ribosomal subunit to form the 70S initiation complex. This Methanosarcina acetivorans (strain ATCC 35395 / DSM 2834 / JCM 12185 / C2A) protein is Translation initiation factor 6.